Consider the following 345-residue polypeptide: Probable S-adenosylmethionine carrier 2, chloroplastic (345 aa).

The transit peptide at 1-31 (MTKALSGFCCSLSLSTLVRSSSSHMDSDIVS) directs the protein to the chloroplast. Solcar repeat units lie at residues 76–148 (RVLY…TKQK), 157–239 (LSAV…LRIG), and 252–334 (ENAM…TKQI). Helical transmembrane passes span 82 to 102 (LITG…IDTI), 121 to 141 (YSGL…FFGV), 156 to 176 (NLSA…SSIV), 254 to 274 (AMIG…LDVI), and 309 to 329 (GMGP…GVLE).

It belongs to the mitochondrial carrier (TC 2.A.29) family. As to expression, expressed at low levels in seedlings, leaves, flowers, stems and roots.

The protein resides in the plastid. Its subcellular location is the chloroplast membrane. Functionally, probable S-adenosylmethionine (SAM) transporter able to catalyze both uniport and exchange reactions through membranes. This Arabidopsis thaliana (Mouse-ear cress) protein is Probable S-adenosylmethionine carrier 2, chloroplastic (SAMC2).